Here is a 66-residue protein sequence, read N- to C-terminus: Stress-associated endoplasmic reticulum protein 1 (66 aa).

Positions 1–33 are disordered; sequence MVAKQRIRMANEKHSKNITQRGNVAKTSRNAPG. Residues 1 to 38 lie on the Cytoplasmic side of the membrane; the sequence is MVAKQRIRMANEKHSKNITQRGNVAKTSRNAPGEKASV. Over residues 17-30 the composition is skewed to polar residues; that stretch reads NITQRGNVAKTSRN. Residues 39–59 traverse the membrane as a helical segment; the sequence is GPWLLALFIFVVCGSAIFQII. Residues 60–66 are Extracellular-facing; sequence QSIRMGM.

It belongs to the RAMP4 family. As to quaternary structure, interacts with SEC61B, SEC61A1 and the SEC61 complex. Interacts with CANX.

It localises to the membrane. The protein resides in the endoplasmic reticulum membrane. Interacts with target proteins during their translocation into the lumen of the endoplasmic reticulum. Protects unfolded target proteins against degradation during ER stress. May facilitate glycosylation of target proteins after termination of ER stress. May modulate the use of N-glycosylation sites on target proteins. The sequence is that of Stress-associated endoplasmic reticulum protein 1 (SERP1) from Pongo abelii (Sumatran orangutan).